The sequence spans 131 residues: Acyl carrier protein 3, mitochondrial (131 aa).

The N-terminal 39 residues, 1–39 (MHCIRSSILQHLRLRVSVRPTSLLQNENGFKSIGIFNFT), are a transit peptide targeting the mitochondrion. One can recognise a Carrier domain in the interval 49-124 (DQILSRVIEL…DVATYILSET (76 aa)). Serine 84 is modified (O-(pantetheine 4'-phosphoryl)serine).

Belongs to the acyl carrier protein (ACP) family. In terms of assembly, complex I is composed of at least 49 different subunits. 4'-phosphopantetheine is transferred from CoA to a specific serine of the apo-ACP-like protein.

The protein localises to the mitochondrion. It functions in the pathway lipid metabolism; fatty acid biosynthesis. Its function is as follows. Carrier of the growing fatty acid chain in fatty acid biosynthesis. May be involved in the synthesis of short and medium chain fatty acids. Accessory and non-catalytic subunit of the mitochondrial membrane respiratory chain NADH dehydrogenase (Complex I), which functions in the transfer of electrons from NADH to the respiratory chain. This is Acyl carrier protein 3, mitochondrial (MTACP2) from Arabidopsis thaliana (Mouse-ear cress).